The chain runs to 613 residues: Proteasome-associated ATPase (613 aa).

A disordered region spans residues 1-29 (MSESERSEGFPEGFAGAGSGSLSSEDAAE). Residues 23 to 100 (SSEDAAELEA…LREEVDRLGQ (78 aa)) adopt a coiled-coil conformation. 300–305 (GCGKTL) lines the ATP pocket. K595 participates in a covalent cross-link: Isoglutamyl lysine isopeptide (Lys-Gln) (interchain with Q-Cter in protein Pup). A docks into pockets in the proteasome alpha-ring region spans residues 612–613 (YL).

It belongs to the AAA ATPase family. In terms of assembly, homohexamer. Assembles into a hexameric ring structure that caps the 20S proteasome core. Strongly interacts with the prokaryotic ubiquitin-like protein Pup through a hydrophobic interface; the interacting region of ARC lies in its N-terminal coiled-coil domain. There is one Pup binding site per ARC hexamer ring. Upon ATP-binding, the C-terminus of ARC interacts with the alpha-rings of the proteasome core, possibly by binding to the intersubunit pockets.

Its pathway is protein degradation; proteasomal Pup-dependent pathway. Functionally, ATPase which is responsible for recognizing, binding, unfolding and translocation of pupylated proteins into the bacterial 20S proteasome core particle. May be essential for opening the gate of the 20S proteasome via an interaction with its C-terminus, thereby allowing substrate entry and access to the site of proteolysis. Thus, the C-termini of the proteasomal ATPase may function like a 'key in a lock' to induce gate opening and therefore regulate proteolysis. The chain is Proteasome-associated ATPase from Mycolicibacterium smegmatis (strain ATCC 700084 / mc(2)155) (Mycobacterium smegmatis).